The following is a 55-amino-acid chain: MPQLNPAPWFSIMIMTWLTLALLIQPKLLTFTTTNPPSSKPSLTTKPTPWAWPWT.

Residues 7–24 (APWFSIMIMTWLTLALLI) form a helical membrane-spanning segment. A disordered region spans residues 34-55 (TNPPSSKPSLTTKPTPWAWPWT).

The protein belongs to the ATPase protein 8 family. As to quaternary structure, component of the ATP synthase complex composed at least of ATP5F1A/subunit alpha, ATP5F1B/subunit beta, ATP5MC1/subunit c (homooctomer), MT-ATP6/subunit a, MT-ATP8/subunit 8, ATP5ME/subunit e, ATP5MF/subunit f, ATP5MG/subunit g, ATP5MK/subunit k, ATP5MJ/subunit j, ATP5F1C/subunit gamma, ATP5F1D/subunit delta, ATP5F1E/subunit epsilon, ATP5PF/subunit F6, ATP5PB/subunit b, ATP5PD/subunit d, ATP5PO/subunit OSCP. ATP synthase complex consists of a soluble F(1) head domain (subunits alpha(3) and beta(3)) - the catalytic core - and a membrane F(0) domain - the membrane proton channel (subunits c, a, 8, e, f, g, k and j). These two domains are linked by a central stalk (subunits gamma, delta, and epsilon) rotating inside the F1 region and a stationary peripheral stalk (subunits F6, b, d, and OSCP).

It is found in the mitochondrion membrane. Functionally, subunit 8, of the mitochondrial membrane ATP synthase complex (F(1)F(0) ATP synthase or Complex V) that produces ATP from ADP in the presence of a proton gradient across the membrane which is generated by electron transport complexes of the respiratory chain. ATP synthase complex consist of a soluble F(1) head domain - the catalytic core - and a membrane F(1) domain - the membrane proton channel. These two domains are linked by a central stalk rotating inside the F(1) region and a stationary peripheral stalk. During catalysis, ATP synthesis in the catalytic domain of F(1) is coupled via a rotary mechanism of the central stalk subunits to proton translocation. In vivo, can only synthesize ATP although its ATP hydrolase activity can be activated artificially in vitro. Part of the complex F(0) domain. The sequence is that of ATP synthase F(0) complex subunit 8 from Aythya americana (Redhead).